The sequence spans 882 residues: Bifunctional heparan sulfate N-deacetylase/N-sulfotransferase 1 (882 aa).

Residues 1–17 (MPALACLRRLCRHLSPQ) are Cytoplasmic-facing. A sufficient for localization to Golgi membrane region spans residues 1–169 (MPALACLRRL…VAYGVGIIGF (169 aa)). Residues 18 to 38 (AVLFLLFVFCLFSVFVSAYYL) form a helical; Signal-anchor for type II membrane protein membrane-spanning segment. Residues 39 to 882 (YGWNRGLEPS…WLREDLQNTR (844 aa)) lie on the Lumenal side of the membrane. Residues 40-598 (GWNRGLEPSA…KRHKDIWSKE (559 aa)) form a heparan sulfate N-deacetylase 1 region. Asn231, Asn351, and Asn401 each carry an N-linked (GlcNAc...) asparagine glycan. The interval 599-882 (KTCDRFPKLL…WLREDLQNTR (284 aa)) is heparan sulfate N-sulfotransferase 1. The active-site For sulfotransferase activity is Lys614. Residue 614–618 (KTGTT) participates in adenosine 3',5'-bisphosphate binding. An N-linked (GlcNAc...) asparagine glycan is attached at Asn667. Adenosine 3',5'-bisphosphate contacts are provided by Ser712 and Trp817. Cys818 and Cys828 are disulfide-bonded. Residue 833–837 (KGRKY) participates in adenosine 3',5'-bisphosphate binding.

The protein belongs to the sulfotransferase 1 family. NDST subfamily. As to quaternary structure, monomer. Interacts with heparan sulfate co-polymerase subunits EXT1 and EXT2. As to expression, widely expressed in adult and throughout development.

The protein resides in the golgi apparatus membrane. It is found in the golgi apparatus. Its subcellular location is the trans-Golgi network membrane. It localises to the cis-Golgi network membrane. The enzyme catalyses N-acetyl-alpha-D-glucosaminyl-[heparan sulfate](n) + H2O = alpha-D-glucosaminyl-[heparan sulfate](n) + acetate. It carries out the reaction alpha-D-glucosaminyl-[heparan sulfate](n) + 3'-phosphoadenylyl sulfate = N-sulfo-alpha-D-glucosaminyl-[heparan sulfate](n) + adenosine 3',5'-bisphosphate + 2 H(+). The protein operates within glycan metabolism; heparan sulfate biosynthesis. It participates in glycan metabolism; heparin biosynthesis. With respect to regulation, inhibited by long N-sulfated sequences (more than 6 sugar residues) accumulating in its substrates heparan sulfate, and heparin. In terms of biological role, essential bifunctional enzyme that catalyzes both the N-deacetylation and the N-sulfation of glucosamine (GlcNAc) of the glycosaminoglycan in heparan sulfate. Modifies the GlcNAc-GlcA disaccharide repeating sugar backbone to make N-sulfated heparosan, a prerequisite substrate for later modifications in heparin biosynthesis. Plays a role in determining the extent and pattern of sulfation of heparan sulfate. Participates in biosynthesis of heparan sulfate that can ultimately serve as L-selectin ligands, thereby playing a role in inflammatory response. Required for the exosomal release of SDCBP, CD63 and syndecan. In Mus musculus (Mouse), this protein is Bifunctional heparan sulfate N-deacetylase/N-sulfotransferase 1.